A 90-amino-acid chain; its full sequence is MKMANSLRGEVLKLYKNLLYLGRDYPKGADYFKKRLKNIFLKNKDVKNPEKIKELIAQGEFVMKELEALYFLRKYRAMKQRYYSDTNKTN.

It belongs to the complex I LYR family. Homotetramer. Interacts with NDUFAB1. Interacts with ETFA. Interacts with ETFB.

The protein resides in the mitochondrion. In terms of biological role, acts as a regulator of the electron transfer flavoprotein by promoting the removal of flavin from the ETF holoenzyme (composed of ETFA and ETFB). The sequence is that of Electron transfer flavoprotein regulatory factor 1 from Homo sapiens (Human).